The sequence spans 193 residues: Putative nucleotidase YqfW (193 aa).

Belongs to the 5'(3')-deoxyribonucleotidase family.

This chain is Putative nucleotidase YqfW (yqfW), found in Bacillus subtilis (strain 168).